A 458-amino-acid chain; its full sequence is MALAINVSSSSSSAISSSSFPSSDLKVTKIGSLRLLNRTNVSAASLSLSGKRSSVKALNVQSITKESIVASEVTEKLDVVEVEDFEELAKRLENASPLEIMDKALEKFGNDIAIAFSGAEDVALIEYAHLTGRPYRVFSLDTGRLNPETYRLFDTVEKHYGIRIEYMFPDAVEVQALVRNKGLFSFYEDGHQECCRIRKVRPLRRALKGLRAWITGQRKDQSPGTRSEIPVVQVDPVFEGLDGGVGSLVKWNPVANVEGNDVWNFLRTMDVPVNTLHAAGYVSIGCEPCTRAVLPGQHEREGRWWWEDAKAKECGLHKGNIKENTNGNATANVNGTASVADIFNSENVVNLSRQGIENLMKLENRKEAWIVVLYAPWCPFCQAMEASFDELADKLGGSGVKVAKFRADGDQKDFAKKELQLGSFPTILVFPKNSSRPIKYPSEKRDVDSLTSFLNLVR.

Residues 1-24 (MALAINVSSSSSSAISSSSFPSSD) form a disordered region. Residues 1-69 (MALAINVSSS…VQSITKESIV (69 aa)) constitute a chloroplast transit peptide. The span at 8 to 23 (SSSSSSAISSSSFPSS) shows a compositional bias: low complexity. The reductase domain stretch occupies residues 70–319 (ASEVTEKLDV…KAKECGLHKG (250 aa)). A Thioredoxin domain is found at 337–458 (ASVADIFNSE…SLTSFLNLVR (122 aa)). Catalysis depends on nucleophile residues cysteine 378 and cysteine 381. Residues cysteine 378 and cysteine 381 are joined by a disulfide bond.

This sequence belongs to the APS reductase family. The cofactor is [4Fe-4S] cluster. In terms of tissue distribution, leaves, roots and stem.

It localises to the plastid. The protein resides in the chloroplast. It catalyses the reaction glutathione disulfide + sulfite + AMP + 2 H(+) = adenosine 5'-phosphosulfate + 2 glutathione. Stimulated by sodium sulfate &gt; ammonium sulfate. Reduces sulfate for Cys biosynthesis. Substrate preference is adenosine-5'-phosphosulfate (APS) &gt;&gt; 3'-phosphoadenosine-5'-phosphosulfate (PAPS). Uses glutathione or DTT as source of protons. In Arabidopsis thaliana (Mouse-ear cress), this protein is 5'-adenylylsulfate reductase 3, chloroplastic (APR3).